The following is a 224-amino-acid chain: Urease accessory protein UreF (224 aa).

This sequence belongs to the UreF family. In terms of assembly, ureD, UreF and UreG form a complex that acts as a GTP-hydrolysis-dependent molecular chaperone, activating the urease apoprotein by helping to assemble the nickel containing metallocenter of UreC. The UreE protein probably delivers the nickel.

The protein localises to the cytoplasm. Its function is as follows. Required for maturation of urease via the functional incorporation of the urease nickel metallocenter. In Pseudomonas putida (strain ATCC 700007 / DSM 6899 / JCM 31910 / BCRC 17059 / LMG 24140 / F1), this protein is Urease accessory protein UreF.